A 388-amino-acid chain; its full sequence is Chorismate synthase (388 aa).

Residues arginine 39 and arginine 45 each coordinate NADP(+). FMN contacts are provided by residues arginine 130–serine 132, asparagine 251–alanine 252, glycine 296, lysine 311–threonine 315, and arginine 337.

This sequence belongs to the chorismate synthase family. Homotetramer. The cofactor is FMNH2.

It catalyses the reaction 5-O-(1-carboxyvinyl)-3-phosphoshikimate = chorismate + phosphate. It functions in the pathway metabolic intermediate biosynthesis; chorismate biosynthesis; chorismate from D-erythrose 4-phosphate and phosphoenolpyruvate: step 7/7. In terms of biological role, catalyzes the anti-1,4-elimination of the C-3 phosphate and the C-6 proR hydrogen from 5-enolpyruvylshikimate-3-phosphate (EPSP) to yield chorismate, which is the branch point compound that serves as the starting substrate for the three terminal pathways of aromatic amino acid biosynthesis. This reaction introduces a second double bond into the aromatic ring system. This chain is Chorismate synthase, found in Streptococcus mutans serotype c (strain ATCC 700610 / UA159).